The following is a 126-amino-acid chain: Protein ApaG (126 aa).

The region spanning 2–126 (NQLAASVSVD…FRLSIPGLLH (125 aa)) is the ApaG domain.

The sequence is that of Protein ApaG from Shewanella pealeana (strain ATCC 700345 / ANG-SQ1).